A 266-amino-acid polypeptide reads, in one-letter code: Exosome complex component Rrp42 (266 aa).

This sequence belongs to the RNase PH family. Rrp42 subfamily. As to quaternary structure, component of the archaeal exosome complex. Forms a hexameric ring-like arrangement composed of 3 Rrp41-Rrp42 heterodimers. The hexameric ring associates with a trimer of Rrp4 and/or Csl4 subunits.

The protein localises to the cytoplasm. In terms of biological role, non-catalytic component of the exosome, which is a complex involved in RNA degradation. Contributes to the structuring of the Rrp41 active site. The protein is Exosome complex component Rrp42 of Methanosarcina mazei (strain ATCC BAA-159 / DSM 3647 / Goe1 / Go1 / JCM 11833 / OCM 88) (Methanosarcina frisia).